The following is a 6629-amino-acid chain: Replicase polyprotein 1ab (6629 aa).

Residues 1-1750 are Cytoplasmic-facing; that stretch reads MASSLKQGVS…VASYKTVLCK (1750 aa). The Ubiquitin-like 1 domain maps to 675 to 780; that stretch reads KTVTFGETTV…SCHLIYRDYE (106 aa). Residues 783–802 form a disordered region; that stretch reads DDIEEEDAEECDTDSGEAEE. Positions 1003–1179 constitute a Macro domain; sequence VKPATCEKPK…YFDVTCKQKT (177 aa). In terms of domain architecture, Ubiquitin-like 2 spans 1175-1227; it reads CKQKTIYLTEDGVKYRSIVLKPGDSLGQFGQVYAKNKIVFTADDVEDKEILYV. The region spanning 1236 to 1497 is the Peptidase C16 domain; sequence EYYGLDAQKY…SKSVKEDVSN (262 aa). Cys-1274 (for PL-PRO activity) is an active-site residue. 4 residues coordinate Zn(2+): Cys-1353, Cys-1355, Cys-1387, and Cys-1390. Residues 1353–1390 form a C4-type; degenerate zinc finger; the sequence is CNCGIKSYELRGLEACIQPVRATNLLHFKTQYSNCPTC. Residues His-1437 and Asp-1448 each act as for PL-PRO activity in the active site. A helical membrane pass occupies residues 1751–1771; that stretch reads VVLATLLIVWFVYTSNPVMFT. The HD1 stretch occupies residues 1751 to 1864; it reads VVLATLLIVW…KPVAGFVIIC (114 aa). Residues 1769–1833 form the 3Ecto domain; the sequence is MFTGIRVLDF…AYSVEQVYKD (65 aa). Residues 1772 to 1843 are Lumenal-facing; it reads GIRVLDFLFE…AASGFIFNWN (72 aa). Intrachain disulfides connect Cys-1785–Cys-1811 and Cys-1802–Cys-1808. The chain crosses the membrane as a helical span at residues 1844 to 1864; it reads WLYLVFLILFVKPVAGFVIIC. The Cytoplasmic portion of the chain corresponds to 1865-2280; the sequence is YCVKYLVLNS…TFKCFKSYFK (416 aa). The tract at residues 1911 to 2001 is Y1; the sequence is YIQVHHILYC…KLKRHVKPTA (91 aa). The region spanning 1911–2263 is the CoV Nsp3 Y domain; that stretch reads YIQVHHILYC…HTQKLLVEKK (353 aa). 8 residues coordinate Zn(2+): His-1915, Cys-1920, Cys-1925, Cys-1928, Cys-1961, His-1964, Cys-1968, and Cys-1971. Residues 1915–1928 are ZF1; the sequence is HHILYCKDVTCEVC. Residues 1961 to 1971 form a ZF2 region; sequence CKRHNWYCRNC. The interval 2002 to 2104 is Y2; sequence YAYHVVDEAC…ILDQALYEQL (103 aa). A coV-Y region spans residues 2002-2263; the sequence is YAYHVVDEAC…HTQKLLVEKK (262 aa). A Y3 region spans residues 2105–2163; it reads VVEPVSKSVIDKVCSILSSIISVDTAALNYKAGTLRDALLSITKDEEAVDMAIFCHNHD. A Y4 region spans residues 2164–2263; it reads VDYTGDGFTN…HTQKLLVEKK (100 aa). The chain crosses the membrane as a helical span at residues 2281–2301; that stretch reads WLLIFYILFTACCSGYYYMEV. The segment at 2281 to 2664 is HD2; it reads WLLIFYILFT…LACCYLGFII (384 aa). Residues 2302 to 2559 are Lumenal-facing; that stretch reads SKSFVHPMYD…FFTGVNPNIY (258 aa). A helical membrane pass occupies residues 2560-2580; sequence MQLATMFLILVVVVLIFAMVI. Residues 2581-2611 are Cytoplasmic-facing; that stretch reads KFQGVFKAYATTVFITMLVWVINAFILCVHS. A helical transmembrane segment spans residues 2612–2632; it reads YNSVLAVILLVLYCYASLVTS. The Lumenal portion of the chain corresponds to 2633 to 2643; the sequence is RNTVIIMHCWL. The helical transmembrane segment at 2644–2664 threads the bilayer; the sequence is VFTFGLIVPTWLACCYLGFII. Over 2665-3096 the chain is Cytoplasmic; sequence YMYTPLFLWC…SSFVRKATSW (432 aa). Residues 2684-2779 enclose the Nsp4C domain; the sequence is LYDGNEFVGN…RYSIGVSRLQ (96 aa). The Peptidase C30 domain occupies 2780-3086; sequence SGFKKLVSPS…FNQIGGVRLQ (307 aa). Catalysis depends on for 3CL-PRO activity residues His-2820 and Cys-2922. Residues 3097–3117 form a helical membrane-spanning segment; sequence FWSRCVLACFLFVLCAIVLFT. Residues 3097-3317 are HD3; that stretch reads FWSRCVLACF…WLCTCYFGLY (221 aa). The Lumenal portion of the chain corresponds to 3118–3121; it reads AVPL. A helical membrane pass occupies residues 3122–3142; it reads KFYVYAAVILLMAVLFISFTV. At 3143 to 3151 the chain is on the cytoplasmic side; that stretch reads KHVMAYMDT. Residues 3152-3172 form a helical membrane-spanning segment; that stretch reads FLLPTLITVIIGVCAEVPFIY. The Lumenal portion of the chain corresponds to 3173-3188; sequence NTLISQVVIFLSQWYD. The chain crosses the membrane as a helical span at residues 3189 to 3209; it reads PVVFDTMVPWMFLPLVLYTAF. Residues 3210 to 3257 are Cytoplasmic-facing; that stretch reads KCVQGCYMNSFNTSLLMLYQFVKLGFVIYTSSNTLTAYTEGNWELFFE. The chain crosses the membrane as a helical span at residues 3258–3278; the sequence is LVHTTVLANVSSNSLIGLFVF. At 3279-3296 the chain is on the lumenal side; that stretch reads KCAKWMLYYCNATYLNNY. Residues 3297–3317 traverse the membrane as a helical segment; the sequence is VLMAVMVNCIGWLCTCYFGLY. Residues 3318–6629 lie on the Cytoplasmic side of the membrane; sequence WWVNKVFGLT…FTSDSFVCTM (3312 aa). Residues 3380-3462 form the RdRp Nsp7 cofactor domain; sequence AKLSDVKCTT…DILKRSTVLQ (83 aa). In terms of domain architecture, RdRp Nsp8 cofactor spans 3463–3672; that stretch reads SVTQEFSHIP…GHNKVDVVLQ (210 aa). In terms of domain architecture, Nsp9 ssRNA-binding spans 3673-3783; sequence NNELMPHGVK…GAISNVVVLQ (111 aa). The ExoN/MTase coactivator domain maps to 3785–3926; it reads KGHETEEVDA…CDSLRQPKSS (142 aa). Residues Cys-3858, Cys-3861, His-3867, Cys-3878, Cys-3904, Cys-3907, Cys-3915, and Cys-3917 each coordinate Zn(2+). 2 zinc fingers span residues 3858–3878 and 3904–3917; these read CLYC…DGRC and CTVC…GCQC. Residues 3940–4198 form the NiRAN domain; that stretch reads YLNRVRGSSE…APERYFEYDV (259 aa). A Nsp12 Interface domain is found at 4203–4301; the sequence is KSYDLLKYDY…MNQDNTMSFS (99 aa). Positions 4232, 4238, 4243, 4247, and 4424 each coordinate Zn(2+). Residues 4302–4868 enclose the Nsp12 RNA-dependent RNA polymerase domain; it reads KMGLSQLMQF…NMYRAPTTLQ (567 aa). A rdRp Fingers N-ter region spans residues 4304–4517; that stretch reads GLSQLMQFVG…HQKILKSIVN (214 aa). A rdRp Palm N-ter region spans residues 4518-4556; sequence TRNASVVIGTTKFYGGWDNMLRNLIQGVEDPILMGWDYP. Positions 4548–4710 constitute a RdRp catalytic domain; sequence PILMGWDYPK…CYNNTLAKQG (163 aa). The interval 4557-4615 is rdRp Fingers C-ter; sequence KCDRAMPNLLRIAASLVLARKHTNCCSWSERIYRLYNECAQVLSETVLATGGIYVKPGG. Residues His-4578, Cys-4581, and Cys-4582 each coordinate Zn(2+). The tract at residues 4616–4751 is rdRp Palm C-ter; sequence TSSGDATTAY…EKGPHEFCSQ (136 aa). Catalysis depends on residues Ser-4695, Asp-4696, and Asp-4697. Residues 4752–4868 form a rdRp Thumb region; the sequence is HTMLVEVDGE…NMYRAPTTLQ (117 aa). Residues 4869–4981 enclose the CV ZBD domain; the sequence is SCGVCVVCNS…DDFNQLATTN (113 aa). Zn(2+) contacts are provided by Cys-4873, Cys-4876, Cys-4884, Cys-4887, Cys-4894, Cys-4897, His-4901, His-4907, Cys-4918, Cys-4923, Cys-4940, and His-4943. Residues 5125–5305 enclose the (+)RNA virus helicase ATP-binding domain; sequence MVPECFVNNI…MVCVKPDIFL (181 aa). 5150 to 5157 lines the ATP pocket; that stretch reads GPPGSGKS. The (+)RNA virus helicase C-terminal domain maps to 5306 to 5477; that stretch reads AKCYRCPKEI…QGTGLFKICN (172 aa). Residues 5539–5753 enclose the ExoN domain; it reads MFITRDEAIR…RCLAINNAFC (215 aa). Residues Asp-5557, Glu-5559, and Glu-5658 contribute to the active site. Positions 5674, 5676, 5692, 5695, 5723, 5727, and 5730 each coordinate Zn(2+). Active-site residues include His-5734 and Asp-5739. Position 5745 (Cys-5745) interacts with Zn(2+). The 228-residue stretch at 5762–5989 folds into the N7-MTase domain; that stretch reads YPHIANEDEV…NLWKSFSALQ (228 aa). Position 5797–5803 (5797–5803) interacts with S-adenosyl-L-methionine; that stretch reads DIGNPKG. The tract at residues 5877 to 5891 is gpppA-binding; sequence CNGGSLYVNKHAFYT. Residues Cys-5915, Cys-5935, Cys-5946, and His-5949 each coordinate Zn(2+). The Nsp15 N-terminal oligomerization domain occupies 5990 to 6050; it reads SIDNIAYNMY…SVAFELYAKR (61 aa). The AV-Nsp11N/CoV-Nsp15M domain maps to 6051-6166; the sequence is NIRTLPNNRI…VYKRVNGAFV (116 aa). Positions 6183–6324 constitute a NendoU domain; that stretch reads EPRSDIERDF…EDGSIKTCYP (142 aa). Active-site residues include His-6212, His-6227, Lys-6267, Lys-6371, Asp-6455, Lys-6499, and Glu-6532. The 300-residue stretch at 6327–6626 folds into the Nidovirus-type SAM-dependent 2'-O-MTase domain; the sequence is QSAWTCGYNM…NTSFTSDSFV (300 aa).

The protein belongs to the coronaviruses polyprotein 1ab family. Interacts with host PHB and PHB2. As to quaternary structure, interacts with papain-like protease and non-structural protein 6. In terms of assembly, monomer. Homodimer. Only the homodimer shows catalytic activity. Eight copies of nsp7 and eight copies of nsp8 assemble to form a heterohexadecamer dsRNA-encircling ring structure. As to quaternary structure, eight copies of nsp7 and eight copies of nsp8 assemble to form a heterohexadecamer dsRNA-encircling ring structure. Interacts with ORF6 protein. In terms of assembly, homodimer. Homododecamer. Interacts with proofreading exoribonuclease nsp14 and 2'-O-methyltransferase nsp16; these interactions enhance nsp14 and nsp16 enzymatic activities. As to quaternary structure, interacts with host DDX1 (via C-terminus). Interacts with non-structural protein 10. In terms of assembly, homohexamer. Interacts with non-structural protein 10. Mn(2+) serves as cofactor. The cofactor is Zn(2+). Post-translationally, specific enzymatic cleavages in vivo by its own proteases yield mature proteins. 3C-like proteinase nsp5 liberates nsps 6-16 from the polyprotein. Papain-like and 3C-like proteinases are autocatalytically processed. N-glycosylated.

The protein localises to the host endoplasmic reticulum membrane. It localises to the host cytoplasm. Its subcellular location is the host perinuclear region. The protein resides in the host endoplasmic reticulum. It is found in the host endoplasmic reticulum-Golgi intermediate compartment. It carries out the reaction Thiol-dependent hydrolysis of ester, thioester, amide, peptide and isopeptide bonds formed by the C-terminal Gly of ubiquitin (a 76-residue protein attached to proteins as an intracellular targeting signal).. It catalyses the reaction RNA(n) + a ribonucleoside 5'-triphosphate = RNA(n+1) + diphosphate. The catalysed reaction is ATP + H2O = ADP + phosphate + H(+). The enzyme catalyses uridylyl-uridylyl-ribonucleotide-RNA = a 3'-end uridylyl-2',3'-cyclophospho-uridine-RNA + a 5'-end dephospho-ribonucleoside-RNA. It carries out the reaction a 5'-end diphospho-ribonucleoside in mRNA + GTP + H(+) = a 5'-end (5'-triphosphoguanosine)-ribonucleoside in mRNA + diphosphate. It catalyses the reaction a 5'-end (N(7)-methyl 5'-triphosphoguanosine)-ribonucleoside in mRNA + S-adenosyl-L-methionine = a 5'-end (N(7)-methyl 5'-triphosphoguanosine)-(2'-O-methyl-ribonucleoside) in mRNA + S-adenosyl-L-homocysteine + H(+). In terms of biological role, multifunctional protein involved in the transcription and replication of viral RNAs. Contains the proteinases responsible for the cleavages of the polyprotein. May play a role in the modulation of host cell survival signaling pathway by interacting with host PHB and PHB2. Indeed, these two proteins play a role in maintaining the functional integrity of the mitochondria and protecting cells from various stresses. Functionally, responsible for the cleavages located at the N-terminus of the replicase polyprotein. In addition, PL-PRO possesses a deubiquitinating/deISGylating activity and processes both 'Lys-48'- and 'Lys-63'-linked polyubiquitin chains from cellular substrates. Its function is as follows. Plays a role in host membrane rearrangement that leads to creation of cytoplasmic double-membrane vesicles (DMV) necessary for viral replication. Alone is able to induce paired membranes. Coexpression of nsp3 and nsp4 does not result in the formation of DMVs. In terms of biological role, responsible for the majority of cleavages as it cleaves the C-terminus of replicase polyprotein at 11 sites. Recognizes substrates containing the core sequence [ILMVF]-Q-|-[SGACN]. Inhibited by the substrate-analog Cbz-Val-Asn-Ser-Thr-Leu-Gln-CMK. Forms a hexadecamer with nsp8 (8 subunits of each) that may participate in viral replication by acting as a primase. Alternatively, may synthesize substantially longer products than oligonucleotide primers. Functionally, forms a hexadecamer with nsp7 (8 subunits of each) that may participate in viral replication by acting as a primase. Alternatively, may synthesize substantially longer products than oligonucleotide primers. Its function is as follows. Forms a primer, NSP9-pU, which is utilized by the polymerase for the initiation of RNA chains. Interacts with ribosome signal recognition particle RNA (SRP). Together with NSP8, suppress protein integration into the cell membrane, thereby disrupting host immune defenses. In terms of biological role, plays a pivotal role in viral transcription by stimulating both nsp14 3'-5' exoribonuclease and nsp16 2'-O-methyltransferase activities. Therefore plays an essential role in viral mRNAs cap methylation. RNA-directed RNA polymerase that catalyzes the transcription of viral genomic and subgenomic RNAs. Acts in complex with nsp7 and nsp8 to transcribe both the minus and positive strands of genomic RNA. The kinase-like NiRAN domain of NSP12 attaches one or more nucleotides to the amino terminus of NSP9, forming a covalent RNA-protein intermediate that serves as transcription/replication primer. Subgenomic RNAs (sgRNAs) are formed by discontinuous transcription: The polymerase has the ability to pause at transcription-regulating sequences (TRS) and jump to the leader TRS, resulting in a major deletion. This creates a series of subgenomic RNAs that are replicated, transcribed and translated. In addition, Nsp12 is a subunit of the viral RNA capping enzyme that catalyzes the RNA guanylyltransferase reaction for genomic and sub-genomic RNAs. Subsequently, the NiRAN domain transfers RNA to GDP, and forms the core cap structure GpppA-RNA. Functionally, multi-functional protein with a zinc-binding domain in N-terminus displaying RNA and DNA duplex-unwinding activities with 5' to 3' polarity. Activity of helicase is dependent on magnesium. Its function is as follows. Enzyme possessing two different activities: an exoribonuclease activity acting on both ssRNA and dsRNA in a 3' to 5' direction and a N7-guanine methyltransferase activity. Acts as a proofreading exoribonuclease for RNA replication, thereby lowering The sensitivity of the virus to RNA mutagens. In terms of biological role, plays a role in viral transcription/replication and prevents the simultaneous activation of host cell dsRNA sensors, such as MDA5/IFIH1, OAS, and PKR. Acts by degrading the 5'-polyuridines generated during replication of the poly(A) region of viral genomic and subgenomic RNAs. Catalyzes a two-step reaction in which a 2'3'-cyclic phosphate (2'3'-cP) is first generated by 2'-O transesterification, which is then hydrolyzed to a 3'-phosphate (3'-P). If not degraded, poly(U) RNA would hybridize with poly(A) RNA tails and activate host dsRNA sensors. Methyltransferase that mediates mRNA cap 2'-O-ribose methylation to the 5'-cap structure of viral mRNAs. N7-methyl guanosine cap is a prerequisite for binding of nsp16. Therefore plays an essential role in viral mRNAs cap methylation which is essential to evade immune system. The polypeptide is Replicase polyprotein 1ab (rep) (Gallus gallus (Chicken)).